Here is a 234-residue protein sequence, read N- to C-terminus: Opacity protein opA65 (234 aa).

A signal peptide is located at residue alanine 1. Residues threonine 154 to glutamate 179 form a disordered region.

Belongs to the opacity porin family.

It localises to the cell outer membrane. Its function is as follows. Implicated in a number of adherence functions. OPA proteins are implicated in pathogenesis and are subject to phase variation. The chain is Opacity protein opA65 from Neisseria gonorrhoeae.